The primary structure comprises 552 residues: Dihydroxyacetone kinase (552 aa).

Residues 8 to 327 (QRTHLVSDVI…LLTEVETSNW (320 aa)) form the DhaK domain. Substrate contacts are provided by residues 58-61 (GSGH), K109, and D114. H220 (tele-hemiaminal-histidine intermediate) is an active-site residue. Residues 356 to 548 (ALVAGIVELV…LAMVFKALAE (193 aa)) form the DhaL domain. ATP contacts are provided by residues 385–388 (DGDT), 431–432 (SS), G468, 476–477 (TM), and 533–535 (DPG).

As to quaternary structure, homodimer. Requires Mg(2+) as cofactor. The cofactor is Ca(2+).

The enzyme catalyses dihydroxyacetone + ATP = dihydroxyacetone phosphate + ADP + H(+). It functions in the pathway polyol metabolism; glycerol fermentation; glycerone phosphate from glycerol (oxidative route): step 2/2. In terms of biological role, catalyzes the phosphorylation of dihydroxyacetone. This chain is Dihydroxyacetone kinase (dhaK), found in Citrobacter freundii.